The primary structure comprises 582 residues: Putative frv operon regulatory protein (582 aa).

Residues 20–39 (PGELAQQTGVSGRTILRDID) constitute a DNA-binding region (H-T-H motif). The region spanning 443-582 (RFFSAPGSFH…EAFMELLHKG (140 aa)) is the PTS EIIA type-2 domain. A Phosphohistidine; by HPr modification is found at H505.

Functionally, could be involved in the regulation of the transcription of the FRV operon. This Escherichia coli (strain K12) protein is Putative frv operon regulatory protein (frvR).